The sequence spans 142 residues: ATP synthase epsilon chain (142 aa).

This sequence belongs to the ATPase epsilon chain family. In terms of assembly, F-type ATPases have 2 components, CF(1) - the catalytic core - and CF(0) - the membrane proton channel. CF(1) has five subunits: alpha(3), beta(3), gamma(1), delta(1), epsilon(1). CF(0) has three main subunits: a, b and c.

The protein localises to the cell inner membrane. Its function is as follows. Produces ATP from ADP in the presence of a proton gradient across the membrane. This is ATP synthase epsilon chain from Shewanella piezotolerans (strain WP3 / JCM 13877).